The chain runs to 570 residues: Sulfite reductase [NADPH] hemoprotein beta-component (570 aa).

Residues cysteine 434, cysteine 440, cysteine 479, and cysteine 483 each contribute to the [4Fe-4S] cluster site. Cysteine 483 contacts siroheme.

Belongs to the nitrite and sulfite reductase 4Fe-4S domain family. In terms of assembly, alpha(8)-beta(8). The alpha component is a flavoprotein, the beta component is a hemoprotein. The cofactor is siroheme. It depends on [4Fe-4S] cluster as a cofactor.

It catalyses the reaction hydrogen sulfide + 3 NADP(+) + 3 H2O = sulfite + 3 NADPH + 4 H(+). Its pathway is sulfur metabolism; hydrogen sulfide biosynthesis; hydrogen sulfide from sulfite (NADPH route): step 1/1. Component of the sulfite reductase complex that catalyzes the 6-electron reduction of sulfite to sulfide. This is one of several activities required for the biosynthesis of L-cysteine from sulfate. The polypeptide is Sulfite reductase [NADPH] hemoprotein beta-component (Shigella dysenteriae serotype 1 (strain Sd197)).